The following is a 486-amino-acid chain: uncharacterized protein (486 aa).

Residue 24 to 35 participates in NAD(+) binding; it reads IVHLGFGAFHRA.

It belongs to the mannitol dehydrogenase family. UxuB subfamily.

This is an uncharacterized protein from Escherichia coli (strain K12).